Consider the following 275-residue polypeptide: Putative replication protein (275 aa).

Positions 98–198 (SKAICFTPYD…RILKISEDYF (101 aa)) constitute a BRCT domain.

The sequence is that of Putative replication protein from Wigglesworthia glossinidia brevipalpis.